Reading from the N-terminus, the 68-residue chain is Glu S.griseus protease inhibitor (68 aa).

Ser-1 is subject to N-acetylserine. An intrachain disulfide couples Cys-3 to Cys-48.

Belongs to the protease inhibitor I13 (potato type I serine protease inhibitor) family.

Functionally, competitively inhibits Glu S.griseus protease by forming probably a 1:1 complex. BGIA has no inhibitory activity against 2 other acidic amino acid-specific endopeptidases (S.aureus protease V8 and B.subtilis proteinase), chymotrypsin, trypsin, pancreatic elastase, and papain, although subtilisin Carlsberg was strongly inhibited. This Momordica charantia (Bitter gourd) protein is Glu S.griseus protease inhibitor.